A 99-amino-acid chain; its full sequence is Large ribosomal subunit protein uL23 (99 aa).

This sequence belongs to the universal ribosomal protein uL23 family. As to quaternary structure, part of the 50S ribosomal subunit. Contacts protein L29, and trigger factor when it is bound to the ribosome.

Functionally, one of the early assembly proteins it binds 23S rRNA. One of the proteins that surrounds the polypeptide exit tunnel on the outside of the ribosome. Forms the main docking site for trigger factor binding to the ribosome. This is Large ribosomal subunit protein uL23 from Francisella tularensis subsp. tularensis (strain SCHU S4 / Schu 4).